A 1495-amino-acid chain; its full sequence is MRRNQLPTPAFLLLFLLLPRDATTATAKPQYVVLVPSEVYSGVPEKACVSLNHVNETVMLSLTLEYAMQQTKLLTDQAVDKDSFYCSPFTISGSPLPYTFITVEIKGPTQRFIKKKSIQIIKAESPVFVQTDKPIYKPGQIVKFRVVSVDISFRPLNETFPVVYIETPKRNRIFQWQNIHLAGGLHQLSFPLSVEPALGIYKVVVQKDSGKKIEHSFEVKEYVLPKFEVIIKMQKTMAFLEEELPITACGVYTYGKPVPGLVTLRVCRKYSRYRSTCHNQNSMSICEEFSQQADDKGCFRQVVKTKVFQLRQKGHDMKIEVEAKIKEEGTGIELTGIGSCEIANALSKLKFTKVNTNYRPGLPFSGQVLLVDEKGKPIPNKNITSVVSPLGYLSIFTTDEHGLANISIDTSNFTAPFLRVVVTYKQNHVCYDNWWLDEFHTQADHSATLVFSPSQSYIQLELVFGTLACGQTQEIRIHYLLNEDIMKNEKDLTFYYLIKARGSIFNLGSHVLSLEQGNMKGVFSLPIQVEPGMAPEAQLLIYAILPNEELVADAQNFEIEKCFANKVNLSFPSAQSLPASDTHLKVKAAPLSLCALTAVDQSVLLLKPEAKLSPQSIYNLLPGKTVQGAFFGVPVYKDHENCISGEDITHNGIVYTPKHSLGDNDAHSIFQSVGINIFTNSKIHKPRFCQEFQHYPAMGGVAPQALAVAASGPGSSFRAMGVPMMGLDYSDEINQVVEVRETVRKYFPETWIWDLVPLDVSGDGELAVKVPDTITEWKASAFCLSGTTGLGLSSTISLQAFQPFFLELTLPYSVVRGEAFTLKATVLNYMSHCIQIRVDLEISPDFLAVPVGGHENSHCICGNERKTVSWAVTPKSLGEVNFTATAEALQSPELCGNKLTEVPALVHKDTVVKSVIVEPEGIEKEQTYNTLLCPQDTELQDNWSLELPPNVVEGSARATHSVLGDILGSAMQNLQNLLQMPYGCGEQNMVLFVPNIYVLNYLNETQQLTEAIKSKAINYLISGYQRQLNYQHSDGSYSTFGNHGGGNTPGNTWLTAFVLKAFAQAQSHIFIEKTHITNAFNWLSMKQKENGCFQQSGYLLNNAMKGGVDDEVTLSAYITIALLEMPLPVTHSAVRNALFCLETAWASISQSQESHVYTKALLAYAFALAGNKAKRSELLESLNKDAVKEEDSLHWQRPGDVQKVKALSFYQPRAPSAEVEMTAYVLLAYLTSESSRPTRDLSSSDLSTASKIVKWISKQQNSHGGFSSTQDTVVALQALSKYGAATFTRSQKEVLVTIESSGTFSKTFHVNSGNRLLLQEVRLPDLPGNYVTKGSGSGCVYLQTSLKYNILPVADGKAPFALQVNTLPLNFDKAGDHRTFQIRINVSYTGERPSSNMVIVDVKMVSGFIPMKPSVKKLQDQPNIQRTEVNTNHVLIYIEKLTNQTLGFSFAVEQDIPVKNLKPAPIKVYDYYETDEFTVEEYSAPFSDGSEQGNA.

The signal sequence occupies residues 1–24 (MRRNQLPTPAFLLLFLLLPRDATT). Cys48 and Cys86 are joined by a disulfide. N-linked (GlcNAc...) asparagine glycans are attached at residues Asn55 and Asn157. Intrachain disulfides connect Cys249–Cys298 and Cys267–Cys286. 3 N-linked (GlcNAc...) asparagine glycosylation sites follow: Asn382, Asn405, and Asn412. Cys469 and Cys562 are joined by a disulfide. N-linked (GlcNAc...) asparagine glycosylation occurs at Asn568. Disulfide bonds link Cys594-Cys783, Cys642-Cys689, Cys833-Cys861, Cys859-Cys895, Cys933-Cys1339, and Cys1092-Cys1140. Residues 686 to 744 (PRFCQEFQHYPAMGGVAPQALAVAASGPGSSFRAMGVPMMGLDYSDEINQVVEVRETVR) form a bait region region. N-linked (GlcNAc...) asparagine glycans are attached at residues Asn881 and Asn942. The isoglutamyl cysteine thioester (Cys-Gln) cross-link spans 984–987 (CGEQ). N-linked (GlcNAc...) asparagine glycosylation occurs at Asn1003. N-linked (GlcNAc...) asparagine glycosylation is found at Asn1385 and Asn1443.

This sequence belongs to the protease inhibitor I39 (alpha-2-macroglobulin) family. Highest expression in liver, medium expression in ovary, heart and stomach. Low expression in lung, kidney and uterus. Protein found in plasma.

The protein localises to the secreted. Functionally, is able to inhibit all four classes of proteinases by a unique 'trapping' mechanism. This protein has a peptide stretch, called the 'bait region' which contains specific cleavage sites for different proteinases. When a proteinase cleaves the bait region, a conformational change is induced in the protein which traps the proteinase. The entrapped enzyme remains active against low molecular weight substrates (activity against high molecular weight substrates is greatly reduced). Following cleavage in the bait region, a thioester bond is hydrolyzed and mediates the covalent binding of the protein to the proteinase. This is Pregnancy zone protein (Pzp) from Mus musculus (Mouse).